Here is a 129-residue protein sequence, read N- to C-terminus: 3-aminoacrylate deaminase RutC (129 aa).

This sequence belongs to the RutC family.

It catalyses the reaction (Z)-3-aminoacrylate + H2O + H(+) = 3-oxopropanoate + NH4(+). Involved in pyrimidine catabolism. Catalyzes the deamination of 3-aminoacrylate to malonic semialdehyde, a reaction that can also occur spontaneously. RutC may facilitate the reaction and modulate the metabolic fitness, rather than catalyzing essential functions. The polypeptide is 3-aminoacrylate deaminase RutC (Rhizobium rhizogenes (strain K84 / ATCC BAA-868) (Agrobacterium radiobacter)).